Consider the following 156-residue polypeptide: Small ribosomal subunit protein uS7 (156 aa).

Belongs to the universal ribosomal protein uS7 family. In terms of assembly, part of the 30S ribosomal subunit. Contacts proteins S9 and S11.

Its function is as follows. One of the primary rRNA binding proteins, it binds directly to 16S rRNA where it nucleates assembly of the head domain of the 30S subunit. Is located at the subunit interface close to the decoding center, probably blocks exit of the E-site tRNA. The chain is Small ribosomal subunit protein uS7 from Maridesulfovibrio salexigens (strain ATCC 14822 / DSM 2638 / NCIMB 8403 / VKM B-1763) (Desulfovibrio salexigens).